Here is a 210-residue protein sequence, read N- to C-terminus: Large ribosomal subunit protein uL3 (210 aa).

Positions 139–165 (AEKVHRSPGSIGHATFPGKVFKGKKMP) are disordered.

The protein belongs to the universal ribosomal protein uL3 family. In terms of assembly, part of the 50S ribosomal subunit. Forms a cluster with proteins L14 and L19.

Functionally, one of the primary rRNA binding proteins, it binds directly near the 3'-end of the 23S rRNA, where it nucleates assembly of the 50S subunit. The chain is Large ribosomal subunit protein uL3 from Maridesulfovibrio salexigens (strain ATCC 14822 / DSM 2638 / NCIMB 8403 / VKM B-1763) (Desulfovibrio salexigens).